A 190-amino-acid polypeptide reads, in one-letter code: 7-methyl-GTP pyrophosphatase (190 aa).

The active-site Proton acceptor is the Asp69.

It belongs to the Maf family. YceF subfamily. Requires a divalent metal cation as cofactor.

It localises to the cytoplasm. The catalysed reaction is N(7)-methyl-GTP + H2O = N(7)-methyl-GMP + diphosphate + H(+). In terms of biological role, nucleoside triphosphate pyrophosphatase that hydrolyzes 7-methyl-GTP (m(7)GTP). May have a dual role in cell division arrest and in preventing the incorporation of modified nucleotides into cellular nucleic acids. The sequence is that of 7-methyl-GTP pyrophosphatase from Xanthomonas axonopodis pv. citri (strain 306).